The sequence spans 293 residues: 5'-3' exoribonuclease Rnm (293 aa).

Mn(2+) is bound by residues H13, H15, D20, H45, E72, H83, H198, D255, and H257.

This sequence belongs to the PHP family. TrpH/YciV subfamily. Mn(2+) serves as cofactor.

The enzyme catalyses a ribonucleoside 3',5'-bisphosphate + H2O = a ribonucleoside 5'-phosphate + phosphate. In terms of biological role, exoribonuclease that catalyzes the last steps of 5S, 16S and 23S rRNA 5'-end maturation. Removes 3 nucleotides (nt) from the 5' end of 5S, 16S and 23S rRNA precursors to generate the mature 5' ends. Precursors with longer extensions are not processed (7 nt at the 5' end of pre-23S rRNA or 66 nt at the 5'-end of 16S rRNA are not processed). 5S and 23S rRNA maturation occurs more efficiently and accurately on ribosomal particles as compared to free RNA; the enzyme overdigests free RNA but generates the correct 5'-end in ribosomes from rnm deletion strains. Efficiently catalyzes the hydrolysis of the 3'-phosphate from 3',5'-bis-phosphonucleotides as well as the successive hydrolysis of 5'-phosphomononucleotides from the 5'-end of short pieces of RNA and DNA, with no specificity toward the identity of the nucleotide base. Is more efficient at hydrolyzing RNA oligonucleotides than DNA oligonucleotides. This enzyme can also hydrolyze annealed DNA duplexes, albeit at a catalytic efficiency approximately 10-fold lower than that of the corresponding single-stranded oligonucleotides. The chain is 5'-3' exoribonuclease Rnm from Escherichia coli (strain K12).